We begin with the raw amino-acid sequence, 362 residues long: Serine/threonine-protein kinase SRK2D (362 aa).

The Protein kinase domain occupies 23 to 279 (YDFVKDIGSG…IPEITSDKWF (257 aa)). ATP is bound by residues 29-37 (IGSGNFGVA) and Lys-52. Catalysis depends on Asp-142, which acts as the Proton acceptor.

It belongs to the protein kinase superfamily. Ser/Thr protein kinase family. As to quaternary structure, interacts with ABI1. Interacts with I-2, TOPP1 and TOPP2. Interacts with FREE1 (via C-terminus). As to expression, expressed in seeds, seedlings, roots (especially in tips), stems, leaves, shoots, flowers and siliques.

It carries out the reaction L-seryl-[protein] + ATP = O-phospho-L-seryl-[protein] + ADP + H(+). It catalyses the reaction L-threonyl-[protein] + ATP = O-phospho-L-threonyl-[protein] + ADP + H(+). In terms of biological role, together with SRK2I, key component and activator of the abscisic acid (ABA) signaling pathway that regulates numerous ABA responses, such as seed germination, Pro accumulation, root growth inhibition, dormancy and seedling growth, and, to a lesser extent, stomatal closure. In response to ABA, phosphorylates the ESCRT-I complex component FREE1, which is required for ABA-induced FREE1 nuclear import. The protein is Serine/threonine-protein kinase SRK2D (SRK2D) of Arabidopsis thaliana (Mouse-ear cress).